Here is a 72-residue protein sequence, read N- to C-terminus: Long neurotoxin 1 (72 aa).

Intrachain disulfides connect cysteine 3–cysteine 21, cysteine 14–cysteine 42, cysteine 27–cysteine 31, cysteine 46–cysteine 57, and cysteine 58–cysteine 63.

This sequence belongs to the three-finger toxin family. Long-chain subfamily. Type II alpha-neurotoxin sub-subfamily. In terms of tissue distribution, expressed by the venom gland.

The protein resides in the secreted. Binds with high affinity to muscular (alpha-1/CHRNA1) and neuronal (alpha-7/CHRNA7) nicotinic acetylcholine receptor (nAChR) and inhibits acetylcholine from binding to the receptor, thereby impairing neuromuscular and neuronal transmission. In Naja anchietae (Anchieta's cobra), this protein is Long neurotoxin 1.